The following is an 871-amino-acid chain: Alanine--tRNA ligase (871 aa).

H561, H565, C665, and H669 together coordinate Zn(2+).

Belongs to the class-II aminoacyl-tRNA synthetase family. Requires Zn(2+) as cofactor.

The protein resides in the cytoplasm. The catalysed reaction is tRNA(Ala) + L-alanine + ATP = L-alanyl-tRNA(Ala) + AMP + diphosphate. Its function is as follows. Catalyzes the attachment of alanine to tRNA(Ala) in a two-step reaction: alanine is first activated by ATP to form Ala-AMP and then transferred to the acceptor end of tRNA(Ala). Also edits incorrectly charged Ser-tRNA(Ala) and Gly-tRNA(Ala) via its editing domain. The protein is Alanine--tRNA ligase of Dehalococcoides mccartyi (strain ATCC BAA-2100 / JCM 16839 / KCTC 5957 / BAV1).